An 85-amino-acid chain; its full sequence is BmK AGP-SYPU2 (85 aa).

The signal sequence occupies residues 1–19 (MNYMVIISLALLVMTGVES). The region spanning 21 to 83 (KDGYIADDRN…ARIMKPGRCN (63 aa)) is the LCN-type CS-alpha/beta domain. Disulfide bonds link Cys-31–Cys-82, Cys-35–Cys-55, Cys-41–Cys-65, and Cys-45–Cys-67.

It belongs to the long (4 C-C) scorpion toxin superfamily. Sodium channel inhibitor family. Alpha subfamily. Expressed by the venom gland.

Its subcellular location is the secreted. Its function is as follows. Alpha toxins bind voltage-independently at site-3 of sodium channels (Nav) and inhibit the inactivation of the activated channels, thereby blocking neuronal transmission. Shows analgesic activity when intraperitoneally injected into mice. This chain is BmK AGP-SYPU2, found in Olivierus martensii (Manchurian scorpion).